We begin with the raw amino-acid sequence, 970 residues long: MSKGFTLEKNLPHQKAGVDAVMNVFVSATPHLTDNVAVRLLANPELKLSEQQYYNNIKNVQAFNGIAHSKDNHNAKSNIIDVSMETGTGKTYTYIKTIFDLNKSFGINKFIIIVPTLSIKAGTVNFLKSDALKEHFRDDYKRELRTYVVESQKNAGKNTKSYMPQAIHDFVEASNFNKKYIHVLVINSGMINSKSLTDTYDTGLLDNQFNTPVDALRAVKPFIIIDEPHRFPTGKKTWENIEKFNAQYIIRYGATFSEGYKNLVYRLTAVDAFNDDLVKGIDAYIEDIVGDGNANLKFVKSDGKEATFELNENNNKKSFKLAKGESLSKTHSAIHDLTLDALNKSTAVLSNGIELKIGSSINPYSYDQTLADNMMRKAVKEHFKLEKELLTQRPRIKPLTLFFIDDIEGYRDGNDISGSLKTKFEEYVLAEANELLKTEQDAFYKNYLEKTVTNISSVHGGYFSKDNSDKDDKIEQEINEILHDKELLLSLDNPRRFIFSKWTLREGWDNPNVFQICKLRSSGSTTSKLQEVGRGLRLPVNEYMCRVKDRNFTLKYYVDFTEKDFVDSLVKEVNESSFKERVPSKFTQELKEQIMAQYPELSSRALMNELFNDEIIDDNDNFKDSDAYSRLKSKYPAAFPIGVKPGKIKKATDGKRRTKMRVGKFSELKELWDLINQKAVIEYKINSESEFLSIFKSFMLEETERFTKSGVHTRIDKIYIHNDMAMSKSIVSDDDDFAKLNTMSYREFLDNLSQTIFVKHGTLHKVFCDIKDTINITEYLNIQTIRKIKSGFSKYLLNNSFNKFSLGYNLISGSIHPTKFTNADGNPLGEVLSSDLGVLQDNAKAPLDTYLFEEVFYDSELERRNITDREIQSVVVFSKIPKNSIKIPVAGGYTYSPDFAYVVKTAEGDYLNFIIETKNVDSKDSLRLEEKRKIEHAQALFNQISQSVKVEFRTQFANDDIYQLIKSALP.

Residues 75-540 (AKSNIIDVSM…EVGRGLRLPV (466 aa)) form a helicase-like domain region. AMP contacts are provided by T91, G122, F126, and D226. The tract at residues 894-918 (TYSPDFAYVVKTAEGDYLNFIIETK) is endonuclease domain.

It belongs to the type III restriction-modification system Res protein family. A heterotetramer with stoichiometry Res(2)Mod(2). A heterotrimer with stoichiometry Res(1)Mod(2). Requires Mg(2+) as cofactor. S-adenosyl-L-methionine serves as cofactor.

It catalyses the reaction Endonucleolytic cleavage of DNA to give specific double-stranded fragments with terminal 5'-phosphates.. Functionally, a type III restriction enzyme that recognizes 2 inversely oriented double-stranded sequences 5'-CAGCAG-3' and cleaves DNA 25-27 base pairs downstream of one site. DNA restriction requires both the Res and Mod subunits. DNA topology affects its action; relaxed and negatively supercoiled DNA are digested but positively supercoiled DNA is not a good substrate. Interacts with DNA approximately one half-turn downstream of the recognition site. After binding to one recognition site undergoes random one-dimensional diffusion along DNA until it collides with a stationary enzyme bound to the second DNA site, which is when DNA cleavage occurs. The protein is Type III restriction-modification enzyme EcoP15I Res subunit of Escherichia coli.